The primary structure comprises 188 residues: RWD domain-containing protein 4 (188 aa).

Serine 2 bears the N-acetylserine mark. One can recognise an RWD domain in the interval 9–111 (MELEALRSIY…EYAKDNKEQF (103 aa)). The interval 132–167 (TPNTAPSSKKKDKKEQLSKAQKRKLADKTDHKGELP) is disordered. The segment covering 155–166 (KLADKTDHKGEL) has biased composition (basic and acidic residues).

This Homo sapiens (Human) protein is RWD domain-containing protein 4 (RWDD4).